The primary structure comprises 349 residues: 4-hydroxy-2-oxovalerate aldolase 1 (349 aa).

Residues 9–261 (ITVHDMTLRD…ATGVDVFRIQ (253 aa)) form the Pyruvate carboxyltransferase domain. A substrate-binding site is contributed by 17 to 18 (RD). Asp18 serves as a coordination point for Mn(2+). The Proton acceptor role is filled by His21. Substrate is bound by residues Ser171 and His200. Mn(2+)-binding residues include His200 and His202. Tyr291 is a substrate binding site.

It belongs to the 4-hydroxy-2-oxovalerate aldolase family.

The enzyme catalyses (S)-4-hydroxy-2-oxopentanoate = acetaldehyde + pyruvate. The protein is 4-hydroxy-2-oxovalerate aldolase 1 of Methylibium petroleiphilum (strain ATCC BAA-1232 / LMG 22953 / PM1).